The primary structure comprises 311 residues: E3 ubiquitin-protein ligase RNF126 (311 aa).

Position 2 is an N-acetylalanine (alanine 2). Position 5 is a phosphoserine (serine 5). The required for interaction with BAG6 stretch occupies residues 5-100 (SPHPGRYFCH…FEIPTFPPGA (96 aa)). Positions 13, 16, 29, and 32 each coordinate Zn(2+). A C4-type zinc finger spans residues 13-32 (CHCCSVEIVPRLPDYICPRC). Disordered regions lie at residues 42 to 64 (EETRSTENGSAPSTAPTDQSRPP) and 94 to 132 (PTFPPGAQADDGRDPESRRERDHPSRHRYGARQPRARLT). The segment covering 47 to 61 (TENGSAPSTAPTDQS) has biased composition (polar residues). A compositionally biased stretch (basic and acidic residues) spans 103–116 (DDGRDPESRRERDH). The span at 117–132 (PSRHRYGARQPRARLT) shows a compositional bias: basic residues. Positions 200-304 (TGPPPADKEK…SSSSSSSPSN (105 aa)) are sufficient for interaction with AICDA. The RING-type zinc-finger motif lies at 229–270 (CPVCKDDYALGERVRQLPCNHLFHDGCIVPWLEQHDSCPVCR). The tract at residues 277-311 (NTATNPPGLTGVSFSSSSSSSSSSSPSNENATSNS) is disordered. Residues 289–311 (SFSSSSSSSSSSSPSNENATSNS) are compositionally biased toward low complexity.

In terms of assembly, interacts with CCDC50, EGFR, FLT3 and SCAMP3. Interacts with BAG6 (via ubiquitin-like domain); required for BAG6-dependent ubiquitination of proteins mislocalized to the cytosol. Interacts with CDKN1A. Interacts with AICDA. Post-translationally, ubiquitinated. May undergo autoubiquitination. Highly expressed in liver and testis.

The protein resides in the cytoplasm. The protein localises to the nucleus. The enzyme catalyses S-ubiquitinyl-[E2 ubiquitin-conjugating enzyme]-L-cysteine + [acceptor protein]-L-lysine = [E2 ubiquitin-conjugating enzyme]-L-cysteine + N(6)-ubiquitinyl-[acceptor protein]-L-lysine.. It participates in protein modification; protein ubiquitination. Its function is as follows. E3 ubiquitin-protein ligase that mediates ubiquitination oF target proteins. Depending on the associated E2 ligase, mediates 'Lys-27'-, 'Lys-29'-, 'Lys-48'- and/or 'Lys-63'-linked polyubiquitination of substrates. Part of a BAG6-dependent quality control process ensuring that proteins of the secretory pathway that are mislocalized to the cytosol are degraded by the proteasome. Probably acts by providing the ubiquitin ligase activity associated with the BAG6 complex and be responsible for ubiquitination of the hydrophobic mislocalized proteins and their targeting to the proteasome. May also play a role in the endosomal recycling of IGF2R, the cation-independent mannose-6-phosphate receptor. May play a role in the endosomal sorting and degradation of several membrane receptors including EGFR, FLT3, MET and CXCR4, by mediating their ubiquitination. By ubiquitinating CDKN1A/p21 and targeting it for degradation, may also promote cell proliferation. May monoubiquitinate AICDA. Acts as a regulator of DNA repair by mediating 'Lys-27'- and 'Lys-29'-linked polyubiquitination of MRE11, thereby promoting the exonuclease activity of MRE11. This chain is E3 ubiquitin-protein ligase RNF126, found in Homo sapiens (Human).